We begin with the raw amino-acid sequence, 179 residues long: Low molecular weight phosphotyrosine protein phosphatase (179 aa).

Catalysis depends on cysteine 15, which acts as the Nucleophile. Arginine 21 is an active-site residue. Residue aspartate 148 is the Proton donor of the active site.

This sequence belongs to the low molecular weight phosphotyrosine protein phosphatase family.

It localises to the cytoplasm. It carries out the reaction O-phospho-L-tyrosyl-[protein] + H2O = L-tyrosyl-[protein] + phosphate. The catalysed reaction is a phosphate monoester + H2O = an alcohol + phosphate. Acts on tyrosine phosphorylated proteins, low-MW aryl phosphates and natural and synthetic acyl phosphates. The protein is Low molecular weight phosphotyrosine protein phosphatase (acp1) of Dictyostelium discoideum (Social amoeba).